The sequence spans 119 residues: Large ribosomal subunit protein bL20 (119 aa).

Belongs to the bacterial ribosomal protein bL20 family.

Binds directly to 23S ribosomal RNA and is necessary for the in vitro assembly process of the 50S ribosomal subunit. It is not involved in the protein synthesizing functions of that subunit. The polypeptide is Large ribosomal subunit protein bL20 (Bordetella bronchiseptica (strain ATCC BAA-588 / NCTC 13252 / RB50) (Alcaligenes bronchisepticus)).